The sequence spans 684 residues: Calpain-14 (684 aa).

The Calpain catalytic domain occupies 43–336 (LFEDTSFPAT…FVLLVICKLT (294 aa)). Residues Cys101, His254, and Asn278 contribute to the active site. Residues 337–503 (PGLLSQEAAQ…KHIFYEIGSN (167 aa)) form a domain III region. Residues 504 to 517 (SGVVFSKEIEDQNE) form a linker region. Residues 518–683 (RQDEFFTKFF…KPEWMMMALY (166 aa)) form a domain IV region. 3 consecutive EF-hand domains span residues 557 to 592 (FSLEACQGILALLDLNASGTMSIQEFRDLWKQLKLS), 586 to 621 (WKQLKLSQKVFHKQDRGSGYLNWEQLHAAMREAGIM), and 651 to 684 (LRVENMEDVFQNLTQDGKGIYLQKPEWMMMALYS). Ca(2+) contacts are provided by Asp570, Asn572, Ser574, Thr576, and Glu581.

It belongs to the peptidase C2 family. Not expressed in tissues tested.

Its function is as follows. Calcium-regulated non-lysosomal thiol-protease. This Homo sapiens (Human) protein is Calpain-14 (CAPN14).